The chain runs to 302 residues: uncharacterized protein (302 aa).

Disordered stretches follow at residues 81–100 (ETSDWDSPASPPVTGAERAA), 155–209 (TVTG…PVNP), and 269–302 (LRIESGSSPGKRPLDDPDEVPSSKRGPSRRALLN). Positions 196-209 (PSLPSSLVSSPVNP) are enriched in low complexity.

This is an uncharacterized protein from Ictalurid herpesvirus 1 (strain Auburn) (IcHV-1).